Reading from the N-terminus, the 528-residue chain is (R)-citramalate synthase (528 aa).

The 263-residue stretch at 4–266 (VKLYDTTLRD…RECIGDDQLR (263 aa)) folds into the Pyruvate carboxyltransferase domain.

It belongs to the alpha-IPM synthase/homocitrate synthase family.

It catalyses the reaction pyruvate + acetyl-CoA + H2O = (3R)-citramalate + CoA + H(+). It participates in amino-acid biosynthesis; L-isoleucine biosynthesis; 2-oxobutanoate from pyruvate: step 1/3. In terms of biological role, catalyzes the condensation of pyruvate and acetyl-coenzyme A to form (R)-citramalate. Makes part of the main pathway for isoleucine biosynthesis in G.sulfurreducens, i.e. the citramalate-dependent pathway. This chain is (R)-citramalate synthase, found in Geobacter sulfurreducens (strain ATCC 51573 / DSM 12127 / PCA).